The chain runs to 436 residues: RNA polymerase sigma-54 factor (436 aa).

A DNA-binding region (H-T-H motif) is located at residues 324–343 (TLREVADCLSLHESTVSRAI). An RPON box motif is present at residues 413 to 421 (SRRTVAKYR).

It belongs to the sigma-54 factor family. As to quaternary structure, interacts transiently with the RNAP core.

In terms of biological role, sigma factors are initiation factors that promote the attachment of RNA polymerase (RNAP) to specific initiation sites and are then released. This sigma factor is responsible for the expression of the levanase operon. The open complex (sigma-54 and core RNA polymerase) serves as the receptor for receipt of the melting signal from the remotely bound activator protein LevR for the expression of the levanase operon. Associates with the RNAP core only in stationary phase cells. The polypeptide is RNA polymerase sigma-54 factor (sigL) (Bacillus subtilis (strain 168)).